The chain runs to 397 residues: Phosphoglycerate kinase (397 aa).

Substrate contacts are provided by residues 21-23, Arg36, 59-62, Arg119, and Arg152; these read DVN and HFGR. ATP-binding positions include Lys202, Glu324, and 354 to 357; that span reads GGDT.

Belongs to the phosphoglycerate kinase family. As to quaternary structure, monomer.

The protein resides in the cytoplasm. It catalyses the reaction (2R)-3-phosphoglycerate + ATP = (2R)-3-phospho-glyceroyl phosphate + ADP. Its pathway is carbohydrate degradation; glycolysis; pyruvate from D-glyceraldehyde 3-phosphate: step 2/5. This is Phosphoglycerate kinase from Cereibacter sphaeroides (strain KD131 / KCTC 12085) (Rhodobacter sphaeroides).